The following is a 323-amino-acid chain: tRNA U34 carboxymethyltransferase (323 aa).

Carboxy-S-adenosyl-L-methionine-binding positions include Lys91, Trp105, Lys110, Gly130, 152-154 (DPT), 181-182 (IE), Met196, Tyr200, and Arg315.

Belongs to the class I-like SAM-binding methyltransferase superfamily. CmoB family. Homotetramer.

The catalysed reaction is carboxy-S-adenosyl-L-methionine + 5-hydroxyuridine(34) in tRNA = 5-carboxymethoxyuridine(34) in tRNA + S-adenosyl-L-homocysteine + H(+). Functionally, catalyzes carboxymethyl transfer from carboxy-S-adenosyl-L-methionine (Cx-SAM) to 5-hydroxyuridine (ho5U) to form 5-carboxymethoxyuridine (cmo5U) at position 34 in tRNAs. The chain is tRNA U34 carboxymethyltransferase from Salmonella paratyphi B (strain ATCC BAA-1250 / SPB7).